We begin with the raw amino-acid sequence, 225 residues long: Uracil-DNA glycosylase (225 aa).

D65 functions as the Proton acceptor in the catalytic mechanism.

This sequence belongs to the uracil-DNA glycosylase (UDG) superfamily. UNG family.

Its subcellular location is the cytoplasm. The enzyme catalyses Hydrolyzes single-stranded DNA or mismatched double-stranded DNA and polynucleotides, releasing free uracil.. Excises uracil residues from the DNA which can arise as a result of misincorporation of dUMP residues by DNA polymerase or due to deamination of cytosine. The sequence is that of Uracil-DNA glycosylase from Clostridium perfringens (strain SM101 / Type A).